The primary structure comprises 191 residues: Apoptosis regulator BHRF1 (191 aa).

The segment at 1–18 (MAYSTREILLALCIRDSR) is interaction with host VRK2. Asn-22 carries N-linked (GlcNAc...) asparagine; by host glycosylation. The BH1 motif lies at 89-109 (EIFHRGDPSLGRALAWMAWCM). The segment at 89 to 142 (EIFHRGDPSLGRALAWMAWCMHACRTLCCNQSTPYYVVDLSVRGMLEASEGLDG) is interaction with host VRK2. N-linked (GlcNAc...) asparagine; by host glycosylation occurs at Asn-118. The BH2 motif lies at 142-157 (GWIHQQGGWSTLIEDN). A helical transmembrane segment spans residues 166 to 186 (WTLFLAGLTLSLLVICSYLFI).

This sequence belongs to the Bcl-2 family. As to quaternary structure, interacts with isoform 1 of host VRK2; this interaction is involved in protecting cells from apoptosis. Interacts with host PRA1; this interaction seems to modulate BHRF1 anti-apoptotic activity. Interacts with host BCL2L11. Interacts with host BAD and BBC3. Interacts with BALF1; BALF1 acting as a negative regulator of the survival function of BHRF1. Interacts with host BECN1.

It is found in the host membrane. It localises to the host mitochondrion. Prevents premature death of the host cell during virus production, which would otherwise reduce the amount of progeny virus. Acts as a host B-cell leukemia/lymphoma 2 (Bcl-2) homolog, and interacts with pro-apoptotic proteins to prevent mitochondria permeabilization, release of cytochrome c and subsequent apoptosis of the host cell. In addition, plays a role in the inhibiton of host BECN1-mediated starvation-induced autophagy without affecting basal levels of autophagy. This chain is Apoptosis regulator BHRF1, found in Homo sapiens (Human).